The chain runs to 555 residues: Formate--tetrahydrofolate ligase (555 aa).

65 to 72 (TPAGEGKS) is an ATP binding site.

The protein belongs to the formate--tetrahydrofolate ligase family.

It carries out the reaction (6S)-5,6,7,8-tetrahydrofolate + formate + ATP = (6R)-10-formyltetrahydrofolate + ADP + phosphate. The protein operates within one-carbon metabolism; tetrahydrofolate interconversion. In Staphylococcus carnosus (strain TM300), this protein is Formate--tetrahydrofolate ligase.